Consider the following 233-residue polypeptide: Apoptosis regulator Bcl-2 (233 aa).

The BH4 signature appears at 10 to 30 (DNREIVLKYIHYKLSQRGYDW). The interval 32–86 (AGEDRPPVPPAPAPAAAPAAVAAAGASSHHRPEPPGSAAASEVPPAEGLRPAPPG) is disordered. The BH3 signature appears at 87–101 (VHLALRQAGDEFSRR). The BH1 signature appears at 130 to 149 (ELFRDGVNWGRIVAFFEFGG). A BH2 motif is present at residues 181 to 196 (NWIQDNGGWDAFVELY). A helical transmembrane segment spans residues 208–228 (WISLKTILSLVLVGACITLGA).

The protein belongs to the Bcl-2 family. In terms of assembly, forms homodimers, and heterodimers with BAX, BAD, BAK and Bcl-X(L). Heterodimerization with BAX requires intact BH1 and BH2 motifs, and is necessary for anti-apoptotic activity. Also interacts with APAF1 and RAF-1. In terms of tissue distribution, in adult chicken expressed, in thymus, spleen, kidney, heart, ovary and brain, with the highest levels in the thymus. In the embryo, highly levels expressed in all tissues with high levels in the bursa of Fabricius.

It localises to the mitochondrion outer membrane. The protein resides in the nucleus membrane. The protein localises to the endoplasmic reticulum membrane. Its subcellular location is the cytoplasm. Suppresses apoptosis in a variety of cell systems including factor-dependent lymphohematopoietic and neural cells. Regulates cell death by controlling the mitochondrial membrane permeability. Appears to function in a feedback loop system with caspases. Inhibits caspase activity either by preventing the release of cytochrome c from the mitochondria and/or by binding to the apoptosis-activating factor (APAF-1). This chain is Apoptosis regulator Bcl-2 (BCL2), found in Gallus gallus (Chicken).